A 269-amino-acid chain; its full sequence is Formamidopyrimidine-DNA glycosylase (269 aa).

Catalysis depends on Pro2, which acts as the Schiff-base intermediate with DNA. Glu3 (proton donor) is an active-site residue. The active-site Proton donor; for beta-elimination activity is the Lys57. DNA contacts are provided by His90, Arg109, and Lys150. The FPG-type zinc-finger motif lies at Gln235–Lys269. Residue Arg259 is the Proton donor; for delta-elimination activity of the active site.

Belongs to the FPG family. As to quaternary structure, monomer. The cofactor is Zn(2+).

The catalysed reaction is Hydrolysis of DNA containing ring-opened 7-methylguanine residues, releasing 2,6-diamino-4-hydroxy-5-(N-methyl)formamidopyrimidine.. It carries out the reaction 2'-deoxyribonucleotide-(2'-deoxyribose 5'-phosphate)-2'-deoxyribonucleotide-DNA = a 3'-end 2'-deoxyribonucleotide-(2,3-dehydro-2,3-deoxyribose 5'-phosphate)-DNA + a 5'-end 5'-phospho-2'-deoxyribonucleoside-DNA + H(+). Involved in base excision repair of DNA damaged by oxidation or by mutagenic agents. Acts as a DNA glycosylase that recognizes and removes damaged bases. Has a preference for oxidized purines, such as 7,8-dihydro-8-oxoguanine (8-oxoG). Has AP (apurinic/apyrimidinic) lyase activity and introduces nicks in the DNA strand. Cleaves the DNA backbone by beta-delta elimination to generate a single-strand break at the site of the removed base with both 3'- and 5'-phosphates. The polypeptide is Formamidopyrimidine-DNA glycosylase (Escherichia coli O157:H7).